Here is a 354-residue protein sequence, read N- to C-terminus: Selenide, water dikinase (354 aa).

Cys-23 is a catalytic residue. ATP contacts are provided by residues Lys-26 and 54–56 (TSD). Asp-57 is a Mg(2+) binding site. ATP contacts are provided by residues Asp-74, Asp-97, and 145-147 (GHS). Asp-97 is a binding site for Mg(2+). Asp-233 is a binding site for Mg(2+).

This sequence belongs to the selenophosphate synthase 1 family. Class I subfamily. Homodimer. Mg(2+) is required as a cofactor.

It catalyses the reaction hydrogenselenide + ATP + H2O = selenophosphate + AMP + phosphate + 2 H(+). In terms of biological role, synthesizes selenophosphate from selenide and ATP. The protein is Selenide, water dikinase of Burkholderia orbicola (strain MC0-3).